Here is a 217-residue protein sequence, read N- to C-terminus: Probable GTP-binding protein EngB (217 aa).

The EngB-type G domain maps to 29–213; it reads GPSEVAFAGR…RQAIAQTVGI (185 aa). GTP is bound by residues 37 to 44, 64 to 68, 91 to 94, 158 to 161, and 192 to 194; these read GRSNVGKS, GRTQE, DMPG, TKTD, and TSS. Mg(2+)-binding residues include S44 and T66.

This sequence belongs to the TRAFAC class TrmE-Era-EngA-EngB-Septin-like GTPase superfamily. EngB GTPase family. Mg(2+) is required as a cofactor.

Necessary for normal cell division and for the maintenance of normal septation. The chain is Probable GTP-binding protein EngB from Rhizobium etli (strain CIAT 652).